Consider the following 377-residue polypeptide: MNALPSSAEFSRAVGGDAVSREAVIRIEHLSKTFSDAAGPVLDDVSLTIRRGEIHGIIGRSGAGKSTLVRCINLLERPSAGRVIVSGREITSLRGRALRNARRDIGMIFQHFNVLSSHTVAGNVALPFKVAGLPRAEIARRIPPLLELVGLAHKADAYPSELSGGQKQRVGIARALALDPSVLLCDEATSALDPETTDQILALLRDINRKLGLTIVLITHEMHVVRDIATRVAVLDHGRVVEEGATFDVLAFPKSAVARSFLSGLVAHELPPPVAAQLLPAAVPGSDPVLRIVFTGTAAHDPIVADLVSVFGIQPNILHGRIDYVGDRPLGVLTLVAGGAGEKLPAVLSHLSSLGLVVEVIGHAVRSAVARRHSAAR.

One can recognise an ABC transporter domain in the interval 25–262 (IRIEHLSKTF…PKSAVARSFL (238 aa)). 59–66 (GRSGAGKS) is a binding site for ATP.

The protein belongs to the ABC transporter superfamily. Methionine importer (TC 3.A.1.24) family. The complex is composed of two ATP-binding proteins (MetN), two transmembrane proteins (MetI) and a solute-binding protein (MetQ).

It is found in the cell inner membrane. It carries out the reaction L-methionine(out) + ATP + H2O = L-methionine(in) + ADP + phosphate + H(+). It catalyses the reaction D-methionine(out) + ATP + H2O = D-methionine(in) + ADP + phosphate + H(+). Part of the ABC transporter complex MetNIQ involved in methionine import. Responsible for energy coupling to the transport system. This Rhodopseudomonas palustris (strain ATCC BAA-98 / CGA009) protein is Methionine import ATP-binding protein MetN 2.